The following is a 273-amino-acid chain: Putative phosphoenolpyruvate synthase regulatory protein (273 aa).

153-160 (GVSRSGKT) is a binding site for ADP.

The protein belongs to the pyruvate, phosphate/water dikinase regulatory protein family. PSRP subfamily.

It catalyses the reaction [pyruvate, water dikinase] + ADP = [pyruvate, water dikinase]-phosphate + AMP + H(+). The catalysed reaction is [pyruvate, water dikinase]-phosphate + phosphate + H(+) = [pyruvate, water dikinase] + diphosphate. Its function is as follows. Bifunctional serine/threonine kinase and phosphorylase involved in the regulation of the phosphoenolpyruvate synthase (PEPS) by catalyzing its phosphorylation/dephosphorylation. The protein is Putative phosphoenolpyruvate synthase regulatory protein of Delftia acidovorans (strain DSM 14801 / SPH-1).